We begin with the raw amino-acid sequence, 130 residues long: DNA-directed RNA polymerase subunit omega (130 aa).

Positions 108-130 are disordered; sequence TEEELLKGLEGLAPPEEQPEEDE.

It belongs to the RNA polymerase subunit omega family. In terms of assembly, the RNAP catalytic core consists of 2 alpha, 1 beta, 1 beta' and 1 omega subunit. When a sigma factor is associated with the core the holoenzyme is formed, which can initiate transcription.

The catalysed reaction is RNA(n) + a ribonucleoside 5'-triphosphate = RNA(n+1) + diphosphate. Its function is as follows. Promotes RNA polymerase assembly. Latches the N- and C-terminal regions of the beta' subunit thereby facilitating its interaction with the beta and alpha subunits. The protein is DNA-directed RNA polymerase subunit omega of Rhodopseudomonas palustris (strain ATCC BAA-98 / CGA009).